Consider the following 376-residue polypeptide: Methionine import ATP-binding protein MetN 1 (376 aa).

The ABC transporter domain maps to 34-273; sequence VRFINLGKTY…PQHEVSKTLL (240 aa). 70–77 is an ATP binding site; sequence GRSGAGKS.

The protein belongs to the ABC transporter superfamily. Methionine importer (TC 3.A.1.24) family. As to quaternary structure, the complex is composed of two ATP-binding proteins (MetN), two transmembrane proteins (MetI) and a solute-binding protein (MetQ).

Its subcellular location is the cell inner membrane. The catalysed reaction is L-methionine(out) + ATP + H2O = L-methionine(in) + ADP + phosphate + H(+). It catalyses the reaction D-methionine(out) + ATP + H2O = D-methionine(in) + ADP + phosphate + H(+). Part of the ABC transporter complex MetNIQ involved in methionine import. Responsible for energy coupling to the transport system. This Pseudomonas syringae pv. tomato (strain ATCC BAA-871 / DC3000) protein is Methionine import ATP-binding protein MetN 1.